A 130-amino-acid chain; its full sequence is L-aspartate semialdehyde sulfurtransferase iron-sulfur subunit (130 aa).

4Fe-4S ferredoxin-type domains follow at residues 72–101 (RPIH…FDET) and 102–130 (WSLC…KLGE). Residues Cys-81, Cys-84, Cys-87, Cys-91, Cys-111, Cys-114, Cys-117, and Cys-121 each coordinate [4Fe-4S] cluster.

May form a complex with MA_1821. It depends on [4Fe-4S] cluster as a cofactor.

The protein operates within amino-acid biosynthesis. Its function is as follows. Required for O-acetylhomoserine sulfhydrylase (OAHS)-independent homocysteine (Hcy) biosynthesis. Together with MA_1821, catalyzes the condensation of sulfide with aspartate semialdehyde to generate homocysteine. May be involved in the reduction of the disulfide formed in MA_1821. This chain is L-aspartate semialdehyde sulfurtransferase iron-sulfur subunit, found in Methanosarcina acetivorans (strain ATCC 35395 / DSM 2834 / JCM 12185 / C2A).